The following is a 334-amino-acid chain: Pre-mRNA leakage protein 39 (334 aa).

In terms of assembly, interacts with MLP1 and MLP2.

It is found in the nucleus membrane. Involved in the nuclear retention of improperly spliced pre-mRNAs. The polypeptide is Pre-mRNA leakage protein 39 (PML39) (Saccharomyces cerevisiae (strain ATCC 204508 / S288c) (Baker's yeast)).